A 43-amino-acid chain; its full sequence is Cuticle protein CP434 (43 aa).

2 repeat units span residues 1–18 (ALVGPSGMILADGTPVQF) and 25–42 (VLTGPSGIVFSNGQNIQL).

Calcified shell.

This Cancer pagurus (Rock crab) protein is Cuticle protein CP434.